A 136-amino-acid chain; its full sequence is Protein PsiE (136 aa).

Transmembrane regions (helical) follow at residues 15-35 (ILQN…VVFL), 55-75 (YELV…ALIV), 83-103 (HFPL…LIIV), and 108-128 (PMDV…LWLC).

This sequence belongs to the PsiE family.

The protein localises to the cell inner membrane. This is Protein PsiE from Salmonella gallinarum (strain 287/91 / NCTC 13346).